The following is a 360-amino-acid chain: UDP-N-acetylglucosamine--N-acetylmuramyl-(pentapeptide) pyrophosphoryl-undecaprenol N-acetylglucosamine transferase (360 aa).

Residues 17-19, Asn-130, Arg-166, Ser-200, Ile-247, and Gln-291 contribute to the UDP-N-acetyl-alpha-D-glucosamine site; that span reads TAG.

This sequence belongs to the glycosyltransferase 28 family. MurG subfamily.

It is found in the cell membrane. It catalyses the reaction di-trans,octa-cis-undecaprenyl diphospho-N-acetyl-alpha-D-muramoyl-L-alanyl-D-glutamyl-meso-2,6-diaminopimeloyl-D-alanyl-D-alanine + UDP-N-acetyl-alpha-D-glucosamine = di-trans,octa-cis-undecaprenyl diphospho-[N-acetyl-alpha-D-glucosaminyl-(1-&gt;4)]-N-acetyl-alpha-D-muramoyl-L-alanyl-D-glutamyl-meso-2,6-diaminopimeloyl-D-alanyl-D-alanine + UDP + H(+). It functions in the pathway cell wall biogenesis; peptidoglycan biosynthesis. Its function is as follows. Cell wall formation. Catalyzes the transfer of a GlcNAc subunit on undecaprenyl-pyrophosphoryl-MurNAc-pentapeptide (lipid intermediate I) to form undecaprenyl-pyrophosphoryl-MurNAc-(pentapeptide)GlcNAc (lipid intermediate II). The polypeptide is UDP-N-acetylglucosamine--N-acetylmuramyl-(pentapeptide) pyrophosphoryl-undecaprenol N-acetylglucosamine transferase (Corynebacterium efficiens (strain DSM 44549 / YS-314 / AJ 12310 / JCM 11189 / NBRC 100395)).